We begin with the raw amino-acid sequence, 457 residues long: uncharacterized protein (457 aa).

This is an uncharacterized protein from Acanthamoeba polyphaga mimivirus (APMV).